The chain runs to 366 residues: Beta sliding clamp (366 aa).

It belongs to the beta sliding clamp family. As to quaternary structure, forms a ring-shaped head-to-tail homodimer around DNA which binds and tethers DNA polymerases and other proteins to the DNA. The DNA replisome complex has a single clamp-loading complex (3 tau and 1 each of delta, delta', psi and chi subunits) which binds 3 Pol III cores (1 core on the leading strand and 2 on the lagging strand) each with a beta sliding clamp dimer. Additional proteins in the replisome are other copies of gamma, psi and chi, Ssb, DNA helicase and RNA primase.

It localises to the cytoplasm. In terms of biological role, confers DNA tethering and processivity to DNA polymerases and other proteins. Acts as a clamp, forming a ring around DNA (a reaction catalyzed by the clamp-loading complex) which diffuses in an ATP-independent manner freely and bidirectionally along dsDNA. Initially characterized for its ability to contact the catalytic subunit of DNA polymerase III (Pol III), a complex, multichain enzyme responsible for most of the replicative synthesis in bacteria; Pol III exhibits 3'-5' exonuclease proofreading activity. The beta chain is required for initiation of replication as well as for processivity of DNA replication. This Buchnera aphidicola subsp. Acyrthosiphon pisum (strain APS) (Acyrthosiphon pisum symbiotic bacterium) protein is Beta sliding clamp (dnaN).